The chain runs to 600 residues: Proline dehydrogenase 1, mitochondrial (600 aa).

The tract at residues 155–177 is disordered; it reads AEHKEMESCTSAAERDGSGTNKR. N6-acetyllysine is present on residues K368 and K486.

It belongs to the proline oxidase family. The cofactor is FAD. Expressed in lung, skeletal muscle and brain, to a lesser extent in heart and kidney, and weakly in liver, placenta and pancreas.

It localises to the mitochondrion matrix. It catalyses the reaction L-proline + a quinone = (S)-1-pyrroline-5-carboxylate + a quinol + H(+). The protein operates within amino-acid degradation; L-proline degradation into L-glutamate; L-glutamate from L-proline: step 1/2. In terms of biological role, converts proline to delta-1-pyrroline-5-carboxylate. The polypeptide is Proline dehydrogenase 1, mitochondrial (Homo sapiens (Human)).